The primary structure comprises 211 residues: Small ribosomal subunit protein eS1 (211 aa).

It belongs to the eukaryotic ribosomal protein eS1 family.

This is Small ribosomal subunit protein eS1 from Methanothrix thermoacetophila (strain DSM 6194 / JCM 14653 / NBRC 101360 / PT) (Methanosaeta thermophila).